Consider the following 492-residue polypeptide: Glutamyl-tRNA(Gln) amidotransferase subunit A (492 aa).

Active-site charge relay system residues include K79 and S154. S178 serves as the catalytic Acyl-ester intermediate.

It belongs to the amidase family. GatA subfamily. As to quaternary structure, heterotrimer of A, B and C subunits.

The catalysed reaction is L-glutamyl-tRNA(Gln) + L-glutamine + ATP + H2O = L-glutaminyl-tRNA(Gln) + L-glutamate + ADP + phosphate + H(+). Allows the formation of correctly charged Gln-tRNA(Gln) through the transamidation of misacylated Glu-tRNA(Gln) in organisms which lack glutaminyl-tRNA synthetase. The reaction takes place in the presence of glutamine and ATP through an activated gamma-phospho-Glu-tRNA(Gln). In Acinetobacter baylyi (strain ATCC 33305 / BD413 / ADP1), this protein is Glutamyl-tRNA(Gln) amidotransferase subunit A.